The chain runs to 367 residues: Probable butyrate kinase (367 aa).

This sequence belongs to the acetokinase family.

The protein localises to the cytoplasm. It carries out the reaction butanoate + ATP = butanoyl phosphate + ADP. The protein is Probable butyrate kinase of Bacillus cereus (strain ATCC 14579 / DSM 31 / CCUG 7414 / JCM 2152 / NBRC 15305 / NCIMB 9373 / NCTC 2599 / NRRL B-3711).